A 111-amino-acid chain; its full sequence is Probable 4-amino-4-deoxy-L-arabinose-phosphoundecaprenol flippase subunit ArnE (111 aa).

Topologically, residues 1-35 (MIWLTLVFASLLSVAGQLCQKQATCFVAISKRRKH) are cytoplasmic. A helical membrane pass occupies residues 36-56 (IVLWLGLALACLGLAMVLWLL). One can recognise an EamA domain in the interval 40 to 109 (LGLALACLGL…IIGGIVILGS (70 aa)). Topologically, residues 57-60 (VLQN) are periplasmic. Residues 61–81 (VPVGIAYPMLSLNFVWVTLAA) form a helical membrane-spanning segment. Over 82–87 (VKLWHE) the chain is Cytoplasmic. Residues 88–108 (PVSPRHWCGVAFIIGGIVILG) traverse the membrane as a helical segment. Topologically, residues 109–111 (STV) are periplasmic.

It belongs to the ArnE family. As to quaternary structure, heterodimer of ArnE and ArnF.

The protein resides in the cell inner membrane. Its pathway is bacterial outer membrane biogenesis; lipopolysaccharide biosynthesis. Functionally, translocates 4-amino-4-deoxy-L-arabinose-phosphoundecaprenol (alpha-L-Ara4N-phosphoundecaprenol) from the cytoplasmic to the periplasmic side of the inner membrane. The chain is Probable 4-amino-4-deoxy-L-arabinose-phosphoundecaprenol flippase subunit ArnE from Escherichia coli O157:H7.